We begin with the raw amino-acid sequence, 419 residues long: Tyrosine--tRNA ligase (419 aa).

Tyr42 is an L-tyrosine binding site. A 'HIGH' region motif is present at residues 47 to 56 (ATAPSLHVGS). The L-tyrosine site is built by Tyr179 and Gln183. The 'KMSKS' region motif lies at 239–243 (KMGKT). Residue Lys242 coordinates ATP. The S4 RNA-binding domain maps to 353–418 (IVLANLFADA…GKKKIVLVKP (66 aa)).

Belongs to the class-I aminoacyl-tRNA synthetase family. TyrS type 1 subfamily. Homodimer.

Its subcellular location is the cytoplasm. The enzyme catalyses tRNA(Tyr) + L-tyrosine + ATP = L-tyrosyl-tRNA(Tyr) + AMP + diphosphate + H(+). In terms of biological role, catalyzes the attachment of tyrosine to tRNA(Tyr) in a two-step reaction: tyrosine is first activated by ATP to form Tyr-AMP and then transferred to the acceptor end of tRNA(Tyr). The chain is Tyrosine--tRNA ligase from Caulobacter sp. (strain K31).